Reading from the N-terminus, the 281-residue chain is Aldo-keto reductase MAP_3007 (281 aa).

Tyrosine 56 serves as the catalytic Proton donor. Residues leucine 196, isoleucine 234, arginine 236, serine 237, alanine 238, serine 245, and arginine 272 each contribute to the NADPH site.

Belongs to the aldo/keto reductase family.

The sequence is that of Aldo-keto reductase MAP_3007 from Mycolicibacterium paratuberculosis (strain ATCC BAA-968 / K-10) (Mycobacterium paratuberculosis).